The sequence spans 400 residues: Serine/threonine transporter SstT (400 aa).

Helical transmembrane passes span 14–34 (IIIA…VTPY), 48–68 (SVAP…FQVG), 76–96 (VLLL…IASL), 136–156 (AISE…GLAM), 177–197 (IIHK…AVTF), 211–231 (LLAV…PILV), 285–305 (IPLG…VLTL), 311–331 (LGIH…TISA), and 349–371 (CSLF…IISV).

The protein belongs to the dicarboxylate/amino acid:cation symporter (DAACS) (TC 2.A.23) family.

Its subcellular location is the cell inner membrane. The catalysed reaction is L-serine(in) + Na(+)(in) = L-serine(out) + Na(+)(out). It catalyses the reaction L-threonine(in) + Na(+)(in) = L-threonine(out) + Na(+)(out). Functionally, involved in the import of serine and threonine into the cell, with the concomitant import of sodium (symport system). This chain is Serine/threonine transporter SstT, found in Acinetobacter baumannii (strain ATCC 17978 / DSM 105126 / CIP 53.77 / LMG 1025 / NCDC KC755 / 5377).